Reading from the N-terminus, the 369-residue chain is Translocating chain-associated membrane protein 1-like 1 (369 aa).

Residues 1–29 (MGLRKKSTKNPPVLSQEFILQNHADIVSC) lie on the Cytoplasmic side of the membrane. The chain crosses the membrane as a helical span at residues 30–50 (VGMFFLLGLVFEGTAEASIVF). Residues 51 to 81 (LTLQHSVAVPAAEEQATGSKSLYYYGVKDLA) lie on the Lumenal side of the membrane. Residues 82–102 (TVFFYMLVAIIIHATIQEYVL) traverse the membrane as a helical segment. Residues 103–121 (DKINKRMQFTKAKQNKFNE) are Cytoplasmic-facing. Residues 117-326 (NKFNESGQFS…TLWLQRWVED (210 aa)) form the TLC domain. The helical transmembrane segment at 122-142 (SGQFSVFYFFSCIWGTFILIS) threads the bilayer. Residues 143–164 (ENCLSDPTLIWKARPHSMMTFQ) lie on the Lumenal side of the membrane. The chain crosses the membrane as a helical span at residues 165-185 (MKFFYISQLAYWFHAFPELYF). Residues 186–196 (QKTKKQDIPRQ) are Cytoplasmic-facing. A helical membrane pass occupies residues 197 to 215 (LVYIGLHLFHITGAYLLYL). Residues 216–219 (NHLG) are Lumenal-facing. A helical transmembrane segment spans residues 220 to 242 (LLLLVLHYFVELLSHMCGLFYFS). Topologically, residues 243 to 249 (DEKYQKG) are cytoplasmic. The chain crosses the membrane as a helical span at residues 250–270 (ISLWAIVFILGRLVTLIVSVL). At 271–297 (TVGFHLAGSQNRNPDALTGNVNVLAAK) the chain is on the lumenal side. The helical transmembrane segment at 298-318 (IAVLSSSCTIQAYVTWNLITL) threads the bilayer. Residues 319-369 (WLQRWVEDSNIQASCMKKKRSRSSKKRTENGVGVETSNRVDCPPKRKEKSS) lie on the Cytoplasmic side of the membrane. Positions 335–369 (KKKRSRSSKKRTENGVGVETSNRVDCPPKRKEKSS) are disordered. Residues 360–369 (CPPKRKEKSS) show a composition bias toward basic and acidic residues.

The protein belongs to the TRAM family.

It localises to the endoplasmic reticulum membrane. Functionally, stimulatory or required for the translocation of secretory proteins across the ER membrane. In Homo sapiens (Human), this protein is Translocating chain-associated membrane protein 1-like 1 (TRAM1L1).